Here is a 195-residue protein sequence, read N- to C-terminus: Thymidine kinase (195 aa).

ATP contacts are provided by residues 8–15 (GLMGSGKS) and 86–89 (DESQ). Glu87 functions as the Proton acceptor in the catalytic mechanism. Residues Cys146, Cys151, Cys184, and His187 each coordinate Zn(2+).

The protein belongs to the thymidine kinase family. In terms of assembly, homotetramer.

Its subcellular location is the cytoplasm. It carries out the reaction thymidine + ATP = dTMP + ADP + H(+). This Bacillus subtilis subsp. natto protein is Thymidine kinase (tdk).